Reading from the N-terminus, the 1122-residue chain is Protein phosphatase 1 regulatory subunit 3A (1122 aa).

Positions 32-58 (TFQPGFSPQPSRRGSDSSEDIYLDTPS) are disordered. Ser-38 and Ser-42 each carry phosphoserine; by GSK3. Ser-46 is modified (phosphoserine; by PKA and ISPK). Ser-49 is subject to Phosphoserine. Residue Thr-56 is modified to Phosphothreonine. A PP1-binding motif motif is present at residues 62 to 65 (RRVS). Residue Ser-65 is modified to Phosphoserine; by PKA. The region spanning 122-230 (QLQIQKAILE…NNNGTNYTFI (109 aa)) is the CBM21 domain. Disordered stretches follow at residues 332 to 351 (STAS…NFPN), 395 to 422 (SSGD…LGDT), 496 to 516 (CLKE…NGKD), and 640 to 668 (GINS…SREN). Composition is skewed to basic and acidic residues over residues 395 to 405 (SSGDDCTHQPS) and 499 to 516 (ESTE…NGKD). Over residues 640-662 (GINSEDQDNSPQHKQSWNVLESQ) the composition is skewed to polar residues. A Phosphoserine modification is found at Ser-844. The span at 963-977 (IEKHPYPESKPEEVS) shows a compositional bias: basic and acidic residues. Disordered stretches follow at residues 963–983 (IEKH…SGIV) and 1025–1058 (RHEN…PVEE). 2 stretches are compositionally biased toward polar residues: residues 1031–1040 (LVSSGQSLYT) and 1048–1058 (SSASTSLPVEE). The helical transmembrane segment at 1078–1098 (YFLLFLIFLITVYHYDLMIGL) threads the bilayer.

Interacts with PPP1CC catalytic subunit of PP1, and associates with glycogen. Phosphorylation at Ser-46 by ISPK stimulates the dephosphorylation of glycogen synthase and phosphorylase kinase. As to expression, skeletal muscle and heart.

Its subcellular location is the membrane. Functionally, seems to act as a glycogen-targeting subunit for PP1. PP1 is essential for cell division, and participates in the regulation of glycogen metabolism, muscle contractility and protein synthesis. Plays an important role in glycogen synthesis but is not essential for insulin activation of glycogen synthase. The sequence is that of Protein phosphatase 1 regulatory subunit 3A (PPP1R3A) from Homo sapiens (Human).